The following is a 455-amino-acid chain: Glutamate-1-semialdehyde 2,1-aminomutase (455 aa).

Lys286 carries the post-translational modification N6-(pyridoxal phosphate)lysine.

This sequence belongs to the class-III pyridoxal-phosphate-dependent aminotransferase family. HemL subfamily. As to quaternary structure, homodimer. Pyridoxal 5'-phosphate is required as a cofactor.

The protein resides in the cytoplasm. The enzyme catalyses (S)-4-amino-5-oxopentanoate = 5-aminolevulinate. Its pathway is porphyrin-containing compound metabolism; protoporphyrin-IX biosynthesis; 5-aminolevulinate from L-glutamyl-tRNA(Glu): step 2/2. The sequence is that of Glutamate-1-semialdehyde 2,1-aminomutase from Clavibacter michiganensis subsp. michiganensis (strain NCPPB 382).